A 616-amino-acid polypeptide reads, in one-letter code: Probable Xaa-Pro aminopeptidase P (616 aa).

Mn(2+) contacts are provided by Asp413, Asp424, Glu522, and Glu536.

Belongs to the peptidase M24B family. Requires Mn(2+) as cofactor.

The enzyme catalyses Release of any N-terminal amino acid, including proline, that is linked to proline, even from a dipeptide or tripeptide.. Functionally, catalyzes the removal of a penultimate prolyl residue from the N-termini of peptides. This is Probable Xaa-Pro aminopeptidase P (AMPP) from Paracoccidioides lutzii (strain ATCC MYA-826 / Pb01) (Paracoccidioides brasiliensis).